A 235-amino-acid chain; its full sequence is ATP-dependent Clp protease proteolytic subunit (235 aa).

The Nucleophile role is filled by S123. Residue H148 is part of the active site.

The protein belongs to the peptidase S14 family. In terms of assembly, fourteen ClpP subunits assemble into 2 heptameric rings which stack back to back to give a disk-like structure with a central cavity, resembling the structure of eukaryotic proteasomes.

The protein localises to the cytoplasm. The catalysed reaction is Hydrolysis of proteins to small peptides in the presence of ATP and magnesium. alpha-casein is the usual test substrate. In the absence of ATP, only oligopeptides shorter than five residues are hydrolyzed (such as succinyl-Leu-Tyr-|-NHMec, and Leu-Tyr-Leu-|-Tyr-Trp, in which cleavage of the -Tyr-|-Leu- and -Tyr-|-Trp bonds also occurs).. Cleaves peptides in various proteins in a process that requires ATP hydrolysis. Has a chymotrypsin-like activity. Plays a major role in the degradation of misfolded proteins. This is ATP-dependent Clp protease proteolytic subunit from Novosphingobium aromaticivorans (strain ATCC 700278 / DSM 12444 / CCUG 56034 / CIP 105152 / NBRC 16084 / F199).